The sequence spans 234 residues: Probable RNA/DNA demethylase ALKBH6 (234 aa).

Residues 96–222 (TANHVLVNEY…RVSLTIRHVP (127 aa)) form the Fe2OG dioxygenase domain. 2 residues coordinate 2-oxoglutarate: Asn-103 and Tyr-105. Fe cation contacts are provided by His-114, Asp-116, and His-180. Positions 213 and 215 each coordinate 2-oxoglutarate.

It belongs to the alkB family. Fe(2+) is required as a cofactor.

The protein localises to the cytoplasm. It localises to the nucleus. Probable Fe(2+)/2-oxoglutarate-dependent dioxygenase involved in oxidative demethylation of nucleic acids. Binds nucleic acids with a preference for ssDNA or ssRNA to other types of DNAs. May play a role in nucleic acid damage repair. The sequence is that of Probable RNA/DNA demethylase ALKBH6 (alkbh6) from Danio rerio (Zebrafish).